Consider the following 307-residue polypeptide: UDP-N-acetylenolpyruvoylglucosamine reductase (307 aa).

The 163-residue stretch at 21 to 183 (RVGGPADLFF…TEVVMEGPPG (163 aa)) folds into the FAD-binding PCMH-type domain. Arg-163 is an active-site residue. A compositionally biased stretch (basic and acidic residues) spans 200 to 209 (EATQPTKDRT). The tract at residues 200–227 (EATQPTKDRTAGSTFRNPAGFSSTGRAD) is disordered. Residues 210 to 224 (AGSTFRNPAGFSSTG) are compositionally biased toward polar residues. Residue Ser-212 is the Proton donor of the active site. Glu-294 is a catalytic residue.

Belongs to the MurB family. FAD serves as cofactor.

It is found in the cytoplasm. The catalysed reaction is UDP-N-acetyl-alpha-D-muramate + NADP(+) = UDP-N-acetyl-3-O-(1-carboxyvinyl)-alpha-D-glucosamine + NADPH + H(+). It functions in the pathway cell wall biogenesis; peptidoglycan biosynthesis. Its function is as follows. Cell wall formation. The protein is UDP-N-acetylenolpyruvoylglucosamine reductase of Dinoroseobacter shibae (strain DSM 16493 / NCIMB 14021 / DFL 12).